The sequence spans 213 residues: MSEGEVDVAAVSQYEVLPKEVLAEVGSVKLFNRWSYEDVEIRDISLTDYIQIRSPVYLPHSAGRYAAKRFRKANCPIIERLTNSLMMHGRNNGKKLMAVRIVAHAFEIIHLMTDQNPIQIAVDAIVNCGPREDSTRIGSAGTVRRQAVDVSPLRRVNQAIALLTTGAREASFRNVKSIAECLAEELINAAKGSSNSYAIKKKDELERVAKSNR.

Belongs to the universal ribosomal protein uS7 family. As to quaternary structure, component of the small ribosomal subunit (SSU). Mature N.crassa ribosomes consist of a small (40S) and a large (60S) subunit. The 40S small subunit contains 1 molecule of ribosomal RNA (18S rRNA) and at least 32 different proteins. The large 60S subunit contains 3 rRNA molecules (26S, 5.8S and 5S rRNA) and at least 42 different proteins.

Its subcellular location is the cytoplasm. Functionally, component of the ribosome, a large ribonucleoprotein complex responsible for the synthesis of proteins in the cell. The small ribosomal subunit (SSU) binds messenger RNAs (mRNAs) and translates the encoded message by selecting cognate aminoacyl-transfer RNA (tRNA) molecules. The large subunit (LSU) contains the ribosomal catalytic site termed the peptidyl transferase center (PTC), which catalyzes the formation of peptide bonds, thereby polymerizing the amino acids delivered by tRNAs into a polypeptide chain. The nascent polypeptides leave the ribosome through a tunnel in the LSU and interact with protein factors that function in enzymatic processing, targeting, and the membrane insertion of nascent chains at the exit of the ribosomal tunnel. This chain is Small ribosomal subunit protein uS7 (rps-5), found in Neurospora crassa (strain ATCC 24698 / 74-OR23-1A / CBS 708.71 / DSM 1257 / FGSC 987).